The sequence spans 194 residues: RNA polymerase II subunit A C-terminal domain phosphatase SSU72 like protein 6 (194 aa).

Belongs to the SSU72 phosphatase family.

The protein localises to the nucleus. The catalysed reaction is O-phospho-L-seryl-[protein] + H2O = L-seryl-[protein] + phosphate. It carries out the reaction O-phospho-L-threonyl-[protein] + H2O = L-threonyl-[protein] + phosphate. Its function is as follows. Protein phosphatase that catalyzes the dephosphorylation of the C-terminal domain of RNA polymerase II. Plays a role in RNA processing and termination. The sequence is that of RNA polymerase II subunit A C-terminal domain phosphatase SSU72 like protein 6 from Homo sapiens (Human).